The chain runs to 123 residues: Large ribosomal subunit protein bL12 (123 aa).

The protein belongs to the bacterial ribosomal protein bL12 family. Homodimer. Part of the ribosomal stalk of the 50S ribosomal subunit. Forms a multimeric L10(L12)X complex, where L10 forms an elongated spine to which 2 to 4 L12 dimers bind in a sequential fashion. Binds GTP-bound translation factors.

Its function is as follows. Forms part of the ribosomal stalk which helps the ribosome interact with GTP-bound translation factors. Is thus essential for accurate translation. The protein is Large ribosomal subunit protein bL12 of Rickettsia bellii (strain OSU 85-389).